The primary structure comprises 411 residues: Acetylornithine aminotransferase, mitochondrial (411 aa).

Lys262 bears the N6-(pyridoxal phosphate)lysine mark.

This sequence belongs to the class-III pyridoxal-phosphate-dependent aminotransferase family. It depends on pyridoxal 5'-phosphate as a cofactor.

It localises to the mitochondrion matrix. The enzyme catalyses N(2)-acetyl-L-ornithine + 2-oxoglutarate = N-acetyl-L-glutamate 5-semialdehyde + L-glutamate. The protein operates within amino-acid biosynthesis; L-arginine biosynthesis; N(2)-acetyl-L-ornithine from L-glutamate: step 4/4. This chain is Acetylornithine aminotransferase, mitochondrial (ARG8), found in Yarrowia lipolytica (strain CLIB 122 / E 150) (Yeast).